A 159-amino-acid chain; its full sequence is Transcription elongation factor GreA (159 aa).

Residues 7-72 (MTVRGAEKLR…IQEIESKLSN (66 aa)) are a coiled coil.

Belongs to the GreA/GreB family.

Its function is as follows. Necessary for efficient RNA polymerase transcription elongation past template-encoded arresting sites. The arresting sites in DNA have the property of trapping a certain fraction of elongating RNA polymerases that pass through, resulting in locked ternary complexes. Cleavage of the nascent transcript by cleavage factors such as GreA or GreB allows the resumption of elongation from the new 3'terminus. GreA releases sequences of 2 to 3 nucleotides. This Buchnera aphidicola subsp. Schizaphis graminum (strain Sg) protein is Transcription elongation factor GreA.